A 506-amino-acid polypeptide reads, in one-letter code: MSNKDLLGRRNFIKGMGAAAGVAMAAPALAVSENANGVKWDKEVEVLIIGSGFAGLAAAIEATRKGAKDVHIFEKMSYFGGNSAINGGLFAAPDTPMQKQEGVKDSVDTMVADQLAAGRGIADEALLRHVAEHAVEALQMTLDAGSEYHPYLQQLGGHSVARTYQTTVSCGAGITQPLLQECRKLGVHTHNRAKFDGFILDEKGGVVGVKMREGYYFDKPESGKLVRIKARRGVIMATGGFAQNINMRMAQDPTLTAEVGCTNAPGATGEGMFEMFRLGAVPVHLAHIQSGPWASPDEGGFGYVSNYSIYNFPHSIAIDRLTGKRFMNEIADRKTRADAELNCRDAQGNPLPPILITSYEDSKQHPNTKKVLKYNVGWKFDSIDALAKHFDVPLAPLKKQIAEYNDYVKTQSDPQFGKNMTEAKGKFIQAPFTVVRLWPKVHYCQGGVQINTNAEVKDSLTGKPISGLYAAGEVCGGIHGVSRLGSCSIPECMVMGMTAARIMMQA.

The segment at residues Met-1–Ala-30 is a signal peptide (tat-type signal). FAD-binding residues include Ala-54, Glu-74, Asn-82, Gly-87, and Gly-88. Arg-333 acts as the Proton donor in catalysis. FAD contacts are provided by Glu-473 and Ile-489.

This sequence belongs to the FAD-dependent oxidoreductase 2 family. FRD/SDH subfamily. As to quaternary structure, the ArdAB flavocytochrome c is composed of a FAD-containing subunit (ArdA) and a heme c-containing subunit (ArdB). FAD serves as cofactor. In terms of processing, predicted to be exported by the Tat system. The position of the signal peptide cleavage has not been experimentally proven.

Its subcellular location is the periplasm. With respect to regulation, methacrylate acts as a competitive inhibitor of the acrylate reductase activity and suppresses the reductase activity in dose-dependent manner. Its function is as follows. FAD-containing subunit of the ArdAB flavocytochrome c, which catalyzes the reduction of acrylate to propanoate and supports dimethylsulfoniopropionate-dependent anaerobic respiration. In vitro, can use the artificial electron donor methyl viologen. The natural electron donor is probably a low-potential cytochrome c. Also shows weak activity toward methacrylate in vitro (at a 22-fold lower rate) but cannot use other tested 2-enoates, including crotonic, fumaric, sorbic, urocanic, cinnamic, p-coumaric, caffeic or ferulic acids. The protein catalyzes a unidirectional reaction and cannot oxidize propanoate with phenazine metasulfate and dichlorophenolindophenol as electron acceptors. The protein is Acrylate reductase flavoprotein subunit of Shewanella woodyi (strain ATCC 51908 / MS32).